A 591-amino-acid polypeptide reads, in one-letter code: Aspartate--tRNA(Asp/Asn) ligase (591 aa).

Position 170 (E170) interacts with L-aspartate. Residues 194-197 (QLFK) form an aspartate region. R216 is an L-aspartate binding site. Residues 216–218 (RDE) and Q225 each bind ATP. L-aspartate is bound at residue H448. E482 provides a ligand contact to ATP. Position 489 (R489) interacts with L-aspartate. ATP is bound at residue 534–537 (GWDR). The segment at 559-591 (GGVDPLTDAPAPITEQQRKESGIDVKPEPSKPH) is disordered. The segment covering 574–591 (QQRKESGIDVKPEPSKPH) has biased composition (basic and acidic residues).

It belongs to the class-II aminoacyl-tRNA synthetase family. Type 1 subfamily. In terms of assembly, homodimer.

The protein localises to the cytoplasm. The enzyme catalyses tRNA(Asx) + L-aspartate + ATP = L-aspartyl-tRNA(Asx) + AMP + diphosphate. Its function is as follows. Aspartyl-tRNA synthetase with relaxed tRNA specificity since it is able to aspartylate not only its cognate tRNA(Asp) but also tRNA(Asn). Reaction proceeds in two steps: L-aspartate is first activated by ATP to form Asp-AMP and then transferred to the acceptor end of tRNA(Asp/Asn). In Mycobacterium avium (strain 104), this protein is Aspartate--tRNA(Asp/Asn) ligase.